The primary structure comprises 727 residues: DNA ligase (727 aa).

Residues 71 to 75 (DGEFD), 120 to 121 (SL), and E150 contribute to the NAD(+) site. The active-site N6-AMP-lysine intermediate is the K152. NAD(+) contacts are provided by R173, E213, K329, and K353. 4 residues coordinate Zn(2+): C447, C450, C466, and C472. The BRCT domain occupies 636–725 (SIERHLTGLS…PEAAAEAALP (90 aa)).

It belongs to the NAD-dependent DNA ligase family. LigA subfamily. Mg(2+) is required as a cofactor. Requires Mn(2+) as cofactor.

It carries out the reaction NAD(+) + (deoxyribonucleotide)n-3'-hydroxyl + 5'-phospho-(deoxyribonucleotide)m = (deoxyribonucleotide)n+m + AMP + beta-nicotinamide D-nucleotide.. In terms of biological role, DNA ligase that catalyzes the formation of phosphodiester linkages between 5'-phosphoryl and 3'-hydroxyl groups in double-stranded DNA using NAD as a coenzyme and as the energy source for the reaction. It is essential for DNA replication and repair of damaged DNA. This chain is DNA ligase, found in Saccharopolyspora erythraea (strain ATCC 11635 / DSM 40517 / JCM 4748 / NBRC 13426 / NCIMB 8594 / NRRL 2338).